A 520-amino-acid polypeptide reads, in one-letter code: Dual specificity tyrosine-phosphorylation-regulated kinase 4 (520 aa).

Residues 1–32 are disordered; that stretch reads MPASELKASEIPFHPSIKTQDPKAEEKSPKKQ. The Bipartite nuclear localization signal signature appears at 19–37; it reads TQDPKAEEKSPKKQKVTLT. Positions 20–29 are enriched in basic and acidic residues; it reads QDPKAEEKSP. Positions 104–400 constitute a Protein kinase domain; the sequence is YEVLETIGKG…PDQALKHAWI (297 aa). Residues 110–118, K133, and 183–186 contribute to the ATP site; these read IGKGSFGQV and FELL. Residue D230 is the Proton acceptor of the active site. Y264 bears the Phosphotyrosine; by autocatalysis mark. The tract at residues 404 to 467 is disordered; that stretch reads RNLKPQPRPQ…KHVQHSGDQQ (64 aa). Basic and acidic residues predominate over residues 439-457; it reads RKADEITKETTEKTKDSPT.

The protein belongs to the protein kinase superfamily. CMGC Ser/Thr protein kinase family. MNB/DYRK subfamily. Requires Mg(2+) as cofactor. Post-translationally, autophosphorylation on Tyr-264 in the activation loop is required for kinase activity.

The protein localises to the cytoplasm. It is found in the nucleus. The enzyme catalyses L-seryl-[protein] + ATP = O-phospho-L-seryl-[protein] + ADP + H(+). It carries out the reaction L-threonyl-[protein] + ATP = O-phospho-L-threonyl-[protein] + ADP + H(+). The catalysed reaction is L-tyrosyl-[protein] + ATP = O-phospho-L-tyrosyl-[protein] + ADP + H(+). Functionally, possible non-essential role in spermiogenesis. The polypeptide is Dual specificity tyrosine-phosphorylation-regulated kinase 4 (DYRK4) (Homo sapiens (Human)).